Reading from the N-terminus, the 140-residue chain is Large ribosomal subunit protein uL14 (140 aa).

The protein belongs to the universal ribosomal protein uL14 family. As to quaternary structure, part of the 50S ribosomal subunit. Forms a cluster with proteins L3 and L24e, part of which may contact the 16S rRNA in 2 intersubunit bridges.

Its function is as follows. Binds to 23S rRNA. Forms part of two intersubunit bridges in the 70S ribosome. In Aeropyrum pernix (strain ATCC 700893 / DSM 11879 / JCM 9820 / NBRC 100138 / K1), this protein is Large ribosomal subunit protein uL14.